A 214-amino-acid polypeptide reads, in one-letter code: Molybdenum cofactor guanylyltransferase (214 aa).

GTP contacts are provided by residues 18-20 (LAG), Lys31, Asp77, and Asp112. Residue Asp112 participates in Mg(2+) binding.

Belongs to the MobA family. As to quaternary structure, monomer. It depends on Mg(2+) as a cofactor.

It localises to the cytoplasm. It catalyses the reaction Mo-molybdopterin + GTP + H(+) = Mo-molybdopterin guanine dinucleotide + diphosphate. In terms of biological role, transfers a GMP moiety from GTP to Mo-molybdopterin (Mo-MPT) cofactor (Moco or molybdenum cofactor) to form Mo-molybdopterin guanine dinucleotide (Mo-MGD) cofactor. The sequence is that of Molybdenum cofactor guanylyltransferase from Rhodopseudomonas palustris (strain HaA2).